The following is a 2760-amino-acid chain: MKLSPQQAPLYGDCVVTVLLAEEDKVEDDAIFYLIFSGSTLYHCTSTRKVSSDTLETIAPGHDCCETVKVLLCASKEGLPVFVVAEEDFHFVQDEAYDAAQFLATSAGNQQALNFTRFLDRSGPPSGDVNSLDEKVALAFRHLKLPAEWNVLGTDHTLHDGGPRETLMHFAVRLGLLRLTWFLLQKPGGRGALSIHNKEGATPVSLALERGYHKLHQLLTEENAGEPDSWSSLSYEIPYGDYSVRHHRELDIYTLTSESESHCEPHGDSCTGHISKLMNIQQQLMKTNLKQMDNLMPLMVTTQDSSCVPCVPEPSDHQQLPFEETKSTVCCQGSPGRKDASPCDLSSVVEEENLICSHKKNKDTGRPGEGVEPASAVDSRSASHQDSCLQSIPDCGVKGREGLPSCGNRNEVTGTQYSGVATCQQPLSSESSVPQDVLVTEPDARQHSSGRELPDSSSTDAGAPEKAGELEHSLLTPDATTQNSKPQVGESAKERLENSDISSAEATAVQALREPKQKADVTNHVFAARAAGADAPAEASPAWSPEEIPTGKPGMETQERGCEGGITSDQSSQVLPAAAAATENKVLDGLELETLPACPCETASSLDLTVSGPRPDGMPKQNSESSAQHAQSLNSQAPLCSIAGAGTPSAESACPQSTETSSGGSVIEHGSGEASLPESTAAQPEPQGLCTAPCPEDPQADTVTSDTAAHNQKSVGSCHLCALDAKNQEKDLRQDTPSVNTLEDVPHLPSVVPQSEEKLEPDQVSPRGSSFSLASSPESESVTKDDVLSLVSSQKEKGTATPQLHRAPACSDGPDGRDLNDTDKVGDGAASPPTPSAVELQTSMGNTSPVGVGEQEGSSLTATLEVLSDSLLQSVDKAALVSDSLLPEEGGSIVVPESSTALGQGGKDKATKCPSVKEDVHSSEMSREDQRTPPPGQEISRLCEKPMSALCAGEKALQHSNSPDTPSACLQTETKHNKEVAPQSSPLMKGGAVQNLVPPKTSLSADSEQKTSSTEQSGSSLLPGGASEALRCSQPSLSVSVESIQFQGKTSACKVSRNAMEDVTVADAFLATAEPTKEDALHHVKDISDLLNQEKKTTPGLPEALLDKGVTDLQEVITPEIEPLDCKREKLEGTDLSCPTSKSKETPNNEETTQPPARDLPTETGLSAINDNGPQADMKHVTQASVPGEESNVTTVLGMVSTQAADGPPGADSIEETATRIVEAVIKQIKASNTLRTQVEIQNPPLSSSEIKEIENTGSESARVFLPGEPLQMENTQKETTGHCSVETEAPEKIILAVHRPEPAPEMPDTKTGGEVDLLSKRSAASEEEAIGNGAATPKMKQAPGTQVINRESWCAIEPCPEAASLLASKQSSECRSFIDVGLGTECATKEGVLQRESGSDSDLFHSPSDEMDSIIFSKPEEEQLLCDTTGSSSSTDDTASLDRHSSHGSDVSLPQTSKLNRSRNHQSSNGFFSHGVDPESREGESEPAGSGEMEEEEMDSITEVPANRSFLRNSMRSLSPFRRHSWGPGKNAASDAEMNQRSSMQVLGHVVRRPPIHRRSMSWCPSGVQYSAALNADFNIRSFSLEGLTGGGGVGNKPSSSLEISSANSSELRNPFSGEEQRSSLMSLSEEHLEPDQRQHHRMFDQQTCYRSKQQGFNYCTSAISSPLTKSISLMTISHPGLDNSRPFHSASANLTESITEENCNFLPPSPSKKSFEEKSGTKVSRTFSYIRNKMSSSKKSKKEKDKKTLNGHTFSPIPIVGPINCSQCMKPFTNKDAYTCASCGAFVHKGCRENLASCAKVKMKQPKGSLQAHDTSSLPTVIMRNKSSQPKERPRSAVLLAEEAIAAPMFTNRRSQQSVSLSKSVSIQNITGVGNDENMSNTWKFLSHSTDSLNKICKVNESTESLTDEGVGTDMNEGQLMGDFESDSKQLEAESWSRTVDSKFLKQQKKDVVKRQEVIYELMQTELHHIRTLKIMSDVYSRGMMTDLLFEQQMVEKLFPCLDELISIHSQFFQRILERKKESLVDKSEKNFLIKRIGDVLVSQFSGENAERLKKTYGKFCGQHNQSVNYFKDLYTKDKRFQAFVKKKMSSSVVRRLGIPECILLVTQRITKYPVLFQRILQCTKDNEVEQEDLTQSLSLVKDVIGAVDSKVASYEKKVRLGEIYTKTDSKSIMRMKSGQMFAKEDLRRKKLVRDGSVFLKSATGRLKEKDQKYVFASLDHKSTVISLKKLIVREVAHEEKGLFLISMGVKDPEMVEVHASSREERNSWIQIIQDTINSLNRDEDEGIPSENEEEKRLLDTKARELKEQLQQKDQQILLLLEEKEMIFRDMTECSTPLPEDCSPTHSPRMLFRSNTEEALKGGPLMKSAISEVEILQGLVSGSLGGTLGQPISSPVEQEVMAGPISLPRRAETFGGFDCHQLNASKGGEKEEGDDGQDLRRTESDSGLKKGGNANLVFMLKRNSEQVVQSIVHLHELLTMLQGVVLQQDSYIEDQKLVLTEKVLTRSASRPSSLIEQEKQRSLEKQRQDLANLQKQQAQHLEEKRRREREWEARELELRDREAKLAEREETVRRRQQDLERDREELQQKKGTYQCDLERLRAAQKQLEREQEQLKRDAEQLSQRQMEQDLCQVSNKHGRLMRVPSFLPNSDEFSLLSTPSITKSGSLDSELSVSPKRNSISRTQKDKGPFHILSSASQTKVPEGQSQAPSSTSTSTRLFGLSKPKEKKEKKKKSKGSRTQPGDGPAPEVPAEGEEIFC.

Disordered stretches follow at residues 356–388 (CSHK…QDSC), 442–517 (PDAR…EPKQ), 530–577 (AAGA…VLPA), 604–711 (SSLD…AAHN), 729–857 (EKDL…EQEG), 890–940 (GGSI…QEIS), 954–1029 (EKAL…ASEA), and 1132–1162 (EGTD…DLPT). Over residues 378–388 (DSRSASHQDSC) the composition is skewed to polar residues. Residues 442–454 (PDARQHSSGRELP) show a composition bias toward basic and acidic residues. The segment at 482-504 (QNSKPQVGESAKERLENSDISSA) is important for interaction with PRKAR2A. Residues 530–547 (AAGADAPAEASPAWSPEE) show a composition bias toward low complexity. Polar residues-rich tracts occupy residues 620 to 638 (KQNS…SQAP), 654 to 664 (CPQSTETSSGG), and 701 to 711 (DTVTSDTAAHN). Low complexity predominate over residues 769–780 (SSFSLASSPESE). S776 is modified (phosphoserine). The residue at position 801 (T801) is a Phosphothreonine. Positions 814-826 (PDGRDLNDTDKVG) are enriched in basic and acidic residues. Polar residues predominate over residues 839-849 (ELQTSMGNTSP). A compositionally biased stretch (basic and acidic residues) spans 906 to 931 (GKDKATKCPSVKEDVHSSEMSREDQR). At T932 the chain carries Phosphothreonine. Polar residues-rich tracts occupy residues 958 to 972 (QHSN…CLQT) and 1001 to 1020 (TSLS…SGSS). S962 carries the phosphoserine modification. Residues 1213–1228 (SIEETATRIVEAVIKQ) are important for interaction with PRKAR2A. Disordered stretches follow at residues 1392 to 1411 (GVLQ…PSDE), 1425 to 1508 (LLCD…VPAN), and 1520 to 1539 (SPFR…DAEM). Over residues 1428-1439 (DTTGSSSSTDDT) the composition is skewed to low complexity. The segment covering 1449–1472 (GSDVSLPQTSKLNRSRNHQSSNGF) has biased composition (polar residues). A phosphoserine mark is found at S1450, S1468, S1501, S1526, and S1585. The tract at residues 1546–1695 (QVLGHVVRRP…SRPFHSASAN (150 aa)) is important for interaction with MAP2K3. Residues 1592-1628 (GGGVGNKPSSSLEISSANSSELRNPFSGEEQRSSLMS) are disordered. Positions 1600–1611 (SSSLEISSANSS) are enriched in low complexity. Phosphoserine is present on residues S1625, S1628, and S1630. K1654 carries the post-translational modification N6-methyllysine. The segment at 1733-1755 (RNKMSSSKKSKKEKDKKTLNGHT) is disordered. The Phorbol-ester/DAG-type zinc-finger motif lies at 1753 to 1800 (GHTFSPIPIVGPINCSQCMKPFTNKDAYTCASCGAFVHKGCRENLASC). Phosphoserine occurs at positions 1838, 1857, and 1891. The interaction with ESR1 stretch occupies residues 1881-2760 (MSNTWKFLSH…VPAEGEEIFC (880 aa)). T1892 is modified (phosphothreonine). A phosphoserine mark is found at S1894 and S1907. In terms of domain architecture, DH spans 1956–2153 (KRQEVIYELM…KDVIGAVDSK (198 aa)). One can recognise a PH domain in the interval 2176–2280 (MRMKSGQMFA…WIQIIQDTIN (105 aa)). Residues S2292 and S2345 each carry the phosphoserine modification. Positions 2292–2329 (SENEEEKRLLDTKARELKEQLQQKDQQILLLLEEKEMI) form a coiled coil. Position 2415 is a phosphothreonine (T2415). The interval 2422–2450 (HQLNASKGGEKEEGDDGQDLRRTESDSGL) is disordered. Positions 2439–2450 (QDLRRTESDSGL) are enriched in basic and acidic residues. A phosphoserine mark is found at S2511 and S2514. A coiled-coil region spans residues 2516 to 2632 (LIEQEKQRSL…LSQRQMEQDL (117 aa)). 2 disordered regions span residues 2568–2588 (AERE…REEL) and 2660–2760 (TPSI…EIFC). Composition is skewed to polar residues over residues 2660–2684 (TPSI…SISR) and 2696–2711 (SSAS…SQAP). S2676 is subject to Phosphoserine. Over residues 2743 to 2752 (PGDGPAPEVP) the composition is skewed to low complexity.

In terms of assembly, interacts with the cAMP-dependent protein kinase (PKA) holoenzyme and with the regulatory subunit PRKAR2A. Interacts with RHOA. Also interacts with RHOB and RHOC. Identified in a ternary complex with RHOA and PRKAR2A. Identified in a complex with NR3C1 and RHOA. Interacts with BRAF and KSR1. Identified in a complex with BRAF and KSR1. Component of a signaling complex containing at least AKAP13, PKN1, MAPK14, ZAK and MAP2K3. Within this complex, AKAP13 interacts directly with PKN1, which in turn recruits MAPK14, MAP2K3 and ZAK. Interacts (phosphorylated form) with YWHAB and YWHAZ. Interaction with YWHAB inhibits activation of RHOA, interferes with PKN1 binding and activation of MAP kinases. Interacts with GNA12. Interacts with IKBKB. Interacts with ESR1, THRA, PPARA and NME2. Interacts (via the C-terminal domain after the PH domain) with MEF2C and RXRB. Interacts (via the C-terminal domain after the PH domain) with PRKD1. In terms of tissue distribution, detected in bone osteoblasts (at protein level).

The protein resides in the cytoplasm. It localises to the cytosol. It is found in the cell cortex. Its subcellular location is the nucleus. The protein localises to the membrane. Scaffold protein that plays an important role in assembling signaling complexes downstream of several types of G protein-coupled receptors. Activates RHOA in response to signaling via G protein-coupled receptors via its function as Rho guanine nucleotide exchange factor. May also activate other Rho family members. Part of a kinase signaling complex that links ADRA1A and ADRA1B adrenergic receptor signaling to the activation of downstream p38 MAP kinases, such as MAPK11 and MAPK14. Part of a signaling complex that links ADRA1B signaling to the activation of RHOA and IKBKB/IKKB, leading to increased NF-kappa-B transcriptional activity. Part of a RHOA-dependent signaling cascade that mediates responses to lysophosphatidic acid (LPA), a signaling molecule that activates G-protein coupled receptors and potentiates transcriptional activation of the glucocorticoid receptor NR3C1. Part of a signaling cascade that stimulates MEF2C-dependent gene expression in response to lysophosphatidic acid (LPA). Part of a signaling pathway that activates MAPK11 and/or MAPK14 and leads to increased transcription activation of the estrogen receptors ESR1 and ESR2. Part of a signaling cascade that links cAMP and EGFR signaling to BRAF signaling and to PKA-mediated phosphorylation of KSR1, leading to the activation of downstream MAP kinases, such as MAPK1 or MAPK3. Functions as a scaffold protein that anchors cAMP-dependent protein kinase (PKA) and PRKD1. This promotes activation of PRKD1, leading to increased phosphorylation of HDAC5 and ultimately cardiomyocyte hypertrophy. Has no guanine nucleotide exchange activity on CDC42, Ras or Rac. Required for normal embryonic heart development, and in particular for normal sarcomere formation in the developing cardiomyocytes. Plays a role in cardiomyocyte growth and cardiac hypertrophy in response to activation of the beta-adrenergic receptor by phenylephrine or isoproterenol. Required for normal adaptive cardiac hypertrophy in response to pressure overload. Plays a role in osteogenesis. The sequence is that of A-kinase anchor protein 13 from Rattus norvegicus (Rat).